A 294-amino-acid chain; its full sequence is tRNA pseudouridine synthase B (294 aa).

The active-site Nucleophile is Asp39.

Belongs to the pseudouridine synthase TruB family. Type 1 subfamily.

It carries out the reaction uridine(55) in tRNA = pseudouridine(55) in tRNA. Functionally, responsible for synthesis of pseudouridine from uracil-55 in the psi GC loop of transfer RNAs. The protein is tRNA pseudouridine synthase B of Streptococcus pyogenes serotype M5 (strain Manfredo).